Reading from the N-terminus, the 277-residue chain is Glycerol-3-phosphate acyltransferase (277 aa).

The next 5 membrane-spanning stretches (helical) occupy residues 3-23 (LFIFLILVGYLMGSINSAIIV), 55-75 (IMVMVFDALKGILPVILAKLL), 79-99 (PVTVAFTALAAVVGHMYPVFF), 111-131 (IGALLAFHFVIGVMVAATWLL), and 155-175 (LILVGNLNIFPPLFMITILVL). The segment at 207-277 (SPATSAEQEF…PKTKTVKEKE (71 aa)) is disordered. Over residues 216-239 (FPGKEVIDTNIDETEKTEQAEAVK) the composition is skewed to basic and acidic residues. Composition is skewed to basic residues over residues 240–253 (KPKVKKATTKAKKT) and 262–271 (KPKSTKPKTK).

It belongs to the PlsY family. As to quaternary structure, probably interacts with PlsX.

Its subcellular location is the cell inner membrane. It carries out the reaction an acyl phosphate + sn-glycerol 3-phosphate = a 1-acyl-sn-glycero-3-phosphate + phosphate. It functions in the pathway lipid metabolism; phospholipid metabolism. Functionally, catalyzes the transfer of an acyl group from acyl-phosphate (acyl-PO(4)) to glycerol-3-phosphate (G3P) to form lysophosphatidic acid (LPA). This enzyme utilizes acyl-phosphate as fatty acyl donor, but not acyl-CoA or acyl-ACP. The polypeptide is Glycerol-3-phosphate acyltransferase (Legionella pneumophila (strain Corby)).